Reading from the N-terminus, the 238-residue chain is Probable transcriptional regulatory protein M6_Spy0297 (238 aa).

It belongs to the TACO1 family. YeeN subfamily.

It is found in the cytoplasm. In Streptococcus pyogenes serotype M6 (strain ATCC BAA-946 / MGAS10394), this protein is Probable transcriptional regulatory protein M6_Spy0297.